The primary structure comprises 259 residues: uncharacterized protein (259 aa).

This is an uncharacterized protein from Schizosaccharomyces pombe (strain 972 / ATCC 24843) (Fission yeast).